Reading from the N-terminus, the 704-residue chain is Polyribonucleotide nucleotidyltransferase (704 aa).

D488 and D494 together coordinate Mg(2+). Residues 555–614 (PRITTLKINPEKIRDVIGKGGATIRALTEETGTTIELEDDGTVKIASANGDATKEAIRRI) enclose the KH domain. An S1 motif domain is found at 624-692 (GTIYNGKVVR…RQGRVRLSMK (69 aa)).

This sequence belongs to the polyribonucleotide nucleotidyltransferase family. Component of the RNA degradosome, which is a multiprotein complex involved in RNA processing and mRNA degradation. Mg(2+) serves as cofactor.

Its subcellular location is the cytoplasm. It carries out the reaction RNA(n+1) + phosphate = RNA(n) + a ribonucleoside 5'-diphosphate. Involved in mRNA degradation. Catalyzes the phosphorolysis of single-stranded polyribonucleotides processively in the 3'- to 5'-direction. This chain is Polyribonucleotide nucleotidyltransferase, found in Shewanella sediminis (strain HAW-EB3).